We begin with the raw amino-acid sequence, 223 residues long: N-terminal Xaa-Pro-Lys N-methyltransferase 1 (223 aa).

At Met1 the chain carries N-acetylmethionine. Thr2 carries the N-acetylthreonine; in N-terminal Xaa-Pro-Lys N-methyltransferase 1, N-terminally processed modification. S-adenosyl-L-methionine is bound by residues Gly69, Arg74, 91–93 (DVT), 119–120 (LQ), and Gln135.

This sequence belongs to the methyltransferase superfamily. NTM1 family.

The protein localises to the nucleus. The catalysed reaction is N-terminal L-alanyl-L-prolyl-L-lysyl-[protein] + 3 S-adenosyl-L-methionine = N-terminal N,N,N-trimethyl-L-alanyl-L-prolyl-L-lysyl-[protein] + 3 S-adenosyl-L-homocysteine + 3 H(+). It catalyses the reaction N-terminal L-seryl-L-prolyl-L-lysyl-[protein] + 3 S-adenosyl-L-methionine = N-terminal N,N,N-trimethyl-L-seryl-L-prolyl-L-lysyl-[protein] + 3 S-adenosyl-L-homocysteine + 3 H(+). The enzyme catalyses N-terminal L-prolyl-L-prolyl-L-lysyl-[protein] + 2 S-adenosyl-L-methionine = N-terminal N,N-dimethyl-L-prolyl-L-prolyl-L-lysyl-[protein] + 2 S-adenosyl-L-homocysteine + 2 H(+). Its function is as follows. Distributive alpha-N-methyltransferase that methylates the N-terminus of target proteins containing the N-terminal motif [Ala/Gly/Pro/Ser]-Pro-Lys when the initiator Met is cleaved. Specifically catalyzes mono-, di- or tri-methylation of the exposed alpha-amino group of the Ala, Gly or Ser residue in the [Ala/Gly/Ser]-Pro-Lys motif and mono- or di-methylation of Pro in the Pro-Pro-Lys motif. Some of the substrates may be primed by NTMT2-mediated monomethylation. Catalyzes the trimethylation of the N-terminal Gly in CENPA (after removal of Met-1). Responsible for the N-terminal methylation of KLHL31, MYL2, MYL3, RB1, RCC1, RPL23A and SET. Required during mitosis for normal bipolar spindle formation and chromosome segregation via its action on RCC1. This is N-terminal Xaa-Pro-Lys N-methyltransferase 1 (Ntmt1) from Rattus norvegicus (Rat).